The sequence spans 160 residues: MSIPHSVFSALLVFVALATTTLASTEACLPTNKREDGMNINFYEYTIGDQTTYLEPEYMGYEYSNTKKLGSVSGQTNLSIYYSPPCESTPTCVTYAVLKRDEDGYDPCGPLYETKKRDTEYCDPNTAYWSSDLFGFYTTPTNVTVEMTGYLIWSMGNRRR.

The signal sequence occupies residues 1-23 (MSIPHSVFSALLVFVALATTTLA). Topologically, residues 24–132 (STEACLPTNK…DPNTAYWSSD (109 aa)) are cytoplasmic. Residues 133–155 (LFGFYTTPTNVTVEMTGYLIWSM) traverse the membrane as a helical segment. Residues 156 to 160 (GNRRR) lie on the Extracellular side of the membrane.

This sequence to yeast protein FLO1.

It is found in the cell membrane. This is an uncharacterized protein from Saccharomyces cerevisiae (strain ATCC 204508 / S288c) (Baker's yeast).